Here is a 115-residue protein sequence, read N- to C-terminus: uncharacterized protein (115 aa).

The next 3 membrane-spanning stretches (helical) occupy residues 10 to 30 (IAIL…SFWL), 47 to 67 (ASGI…ATVA), and 77 to 97 (VHFF…AIIV).

It localises to the cell membrane. This is an uncharacterized protein from Mycoplasma genitalium (strain ATCC 33530 / DSM 19775 / NCTC 10195 / G37) (Mycoplasmoides genitalium).